The primary structure comprises 142 residues: Putative pre-16S rRNA nuclease (142 aa).

The protein belongs to the YqgF nuclease family.

The protein resides in the cytoplasm. Its function is as follows. Could be a nuclease involved in processing of the 5'-end of pre-16S rRNA. This is Putative pre-16S rRNA nuclease from Lactobacillus acidophilus (strain ATCC 700396 / NCK56 / N2 / NCFM).